Here is a 1005-residue protein sequence, read N- to C-terminus: MAPARGRLPPALWVVTAAAAAATCVSAARGEVNLLDTSTIHGDWGWLTYPAHGWDSINEVDESFQPIHTYQVCNVMSPNQNNWLRTSWVPRDGARRVYAEIKFTLRDCNSMPGVLGTCKETFNLYYLESDRDLGASTQESQFLKIDTIAADESFTGADLGVRRLKLNTEVRSVGPLSKRGFYLAFQDIGACLAILSLRIYYKKCPAMVRNLAAFSEAVTGADSSSLVEVRGQCVRHSEERDTPKMYCSAEGEWLVPIGKCVCSAGYEERRDACVACELGFYKSAPGDQLCARCPPHSHSAAPAAQACHCDLSYYRAALDPPSSACTRPPSAPVNLISSVNGTSVTLEWAPPLDPGGRSDITYNAVCRRCPWALSRCEACGSGTRFVPQQTSLVQASLLVANLLAHMNYSFWIEAVNGVSDLSPEPRRAAVVNITTNQAAPSQVVVIRQERAGQTSVSLLWQEPEQPNGIILEYEIKYYEKDKEMQSYSTLKAVTTRATVSGLKPGTRYVFQVRARTSAGCGRFSQAMEVETGKPRPRYDTRTIVWICLTLITGLVVLLLLLICKKRHCGYSKAFQDSDEEKMHYQNGQAPPPVFLPLHHPPGKLPEPQFYAEPHTYEEPGRAGRSFTREIEASRIHIEKIIGSGDSGEVCYGRLRVPGQRDVPVAIKALKAGYTERQRRDFLSEASIMGQFDHPNIIRLEGVVTRGRLAMIVTEYMENGSLDTFLRTHDGQFTIMQLVGMLRGVGAGMRYLSDLGYVHRDLAARNVLVDSNLVCKVSDFGLSRVLEDDPDAAYTTTGGKIPIRWTAPEAIAFRTFSSASDVWSFGVVMWEVLAYGERPYWNMTNRDVISSVEEGYRLPAPMGCPHALHQLMLDCWHKDRAQRPRFSQIVSVLDALIRSPESLRATATVSRCPPPAFVRSCFDLRGGSGGGGGLTVGDWLDSIRMGRYRDHFAAGGYSSLGMVLRMNAQDVRALGITLMGHQKKILGSIQTMRAQLTSTQGPRRHL.

Positions 1-27 (MAPARGRLPPALWVVTAAAAAATCVSA) are cleaved as a signal peptide. Residues 28-542 (ARGEVNLLDT…KPRPRYDTRT (515 aa)) are Extracellular-facing. An Eph LBD domain is found at 31–209 (EVNLLDTSTI…YYKKCPAMVR (179 aa)). Fibronectin type-III domains follow at residues 328–438 (PPSA…TNQA) and 439–534 (APSQ…TGKP). Residues Asn-340, Asn-407, and Asn-432 are each glycosylated (N-linked (GlcNAc...) asparagine). The helical transmembrane segment at 543-563 (IVWICLTLITGLVVLLLLLIC) threads the bilayer. A mediates interaction with ANKS1A and ANKS1B region spans residues 564-570 (KKRHCGY). The Cytoplasmic segment spans residues 564 to 1005 (KKRHCGYSKA…TSTQGPRRHL (442 aa)). Positions 589 to 644 (APPPVFLPLHHPPGKLPEPQFYAEPHTYEEPGRAGRSFTREIEASRIHIEKIIGSG) are mediates interaction with PIK3CG and required for endocytosis. Tyr-616 is subject to Phosphotyrosine; by autocatalysis. The Protein kinase domain maps to 635-896 (IHIEKIIGSG…QIVSVLDALI (262 aa)). ATP contacts are provided by residues 641 to 649 (IGSGDSGEV) and Lys-667. Asp-760 acts as the Proton acceptor in catalysis. Residue Tyr-839 is modified to Phosphotyrosine; by autocatalysis. One can recognise an SAM domain in the interval 930-994 (GGGLTVGDWL…LGSIQTMRAQ (65 aa)). The PDZ-binding signature appears at 1003–1005 (RHL).

It belongs to the protein kinase superfamily. Tyr protein kinase family. Ephrin receptor subfamily. As to quaternary structure, heterotetramer upon binding of the ligand. The heterotetramer is composed of an ephrin dimer and a receptor dimer. Oligomerization is probably required to induce biological responses. May also form heterodimers with other ephrin receptors. Interacts with FYN; possible downstream effector of EPHA8 in regulation of cell adhesion. Interacts with PIK3CG; regulates integrin-mediated cell adhesion to substrate. Interacts with TIAM1; regulates clathrin-mediated endocytosis of EPHA8. Interacts with ANKS1A and ANKS1B; EPHA8 kinase activity-independent but stimulated by EPHA8 ubiquitination. Phosphorylated. Phosphorylation is stimulated upon binding of its ligands including EFNA2, EFNA3 and EFNA5. Autophosphorylation on Tyr-616 is critical for association with FYN. Autophosphorylation on Tyr-839 modulates tyrosine kinase activity. Post-translationally, ubiquitinated. Ubiquitination by CBL regulates the receptor stability and activity through proteasomal degradation. ANKS1A prevents ubiquitination and degradation.

Its subcellular location is the cell membrane. The protein localises to the cell projection. It localises to the early endosome membrane. The enzyme catalyses L-tyrosyl-[protein] + ATP = O-phospho-L-tyrosyl-[protein] + ADP + H(+). Its function is as follows. Receptor tyrosine kinase which binds promiscuously GPI-anchored ephrin-A family ligands residing on adjacent cells, leading to contact-dependent bidirectional signaling into neighboring cells. The signaling pathway downstream of the receptor is referred to as forward signaling while the signaling pathway downstream of the ephrin ligand is referred to as reverse signaling. The GPI-anchored ephrin-A EFNA2, EFNA3, and EFNA5 are able to activate EPHA8 through phosphorylation. With EFNA5 may regulate integrin-mediated cell adhesion and migration on fibronectin substrate but also neurite outgrowth. During development of the nervous system also plays a role in axon guidance. Downstream effectors of the EPHA8 signaling pathway include FYN which promotes cell adhesion upon activation by EPHA8 and the MAP kinases in the stimulation of neurite outgrowth. The protein is Ephrin type-A receptor 8 (EPHA8) of Homo sapiens (Human).